Here is a 329-residue protein sequence, read N- to C-terminus: Beta-ketoacyl-[acyl-carrier-protein] synthase III (329 aa).

Residues Cys-123 and His-256 contribute to the active site. The tract at residues 257–261 is ACP-binding; sequence QANVR. Asn-286 is a catalytic residue.

Belongs to the thiolase-like superfamily. FabH family. In terms of assembly, homodimer.

The protein resides in the cytoplasm. The enzyme catalyses malonyl-[ACP] + acetyl-CoA + H(+) = 3-oxobutanoyl-[ACP] + CO2 + CoA. Its pathway is lipid metabolism; fatty acid biosynthesis. Its function is as follows. Catalyzes the condensation reaction of fatty acid synthesis by the addition to an acyl acceptor of two carbons from malonyl-ACP. Catalyzes the first condensation reaction which initiates fatty acid synthesis and may therefore play a role in governing the total rate of fatty acid production. Possesses both acetoacetyl-ACP synthase and acetyl transacylase activities. Its substrate specificity determines the biosynthesis of branched-chain and/or straight-chain of fatty acids. The polypeptide is Beta-ketoacyl-[acyl-carrier-protein] synthase III (Bordetella parapertussis (strain 12822 / ATCC BAA-587 / NCTC 13253)).